The chain runs to 213 residues: Uracil phosphoribosyltransferase (213 aa).

5-phospho-alpha-D-ribose 1-diphosphate is bound by residues arginine 77, arginine 102, and 129 to 137 (DPMLATGGS). Uracil is bound by residues isoleucine 198 and 203–205 (GDA). A 5-phospho-alpha-D-ribose 1-diphosphate-binding site is contributed by aspartate 204.

This sequence belongs to the UPRTase family. Mg(2+) is required as a cofactor.

The enzyme catalyses UMP + diphosphate = 5-phospho-alpha-D-ribose 1-diphosphate + uracil. It participates in pyrimidine metabolism; UMP biosynthesis via salvage pathway; UMP from uracil: step 1/1. With respect to regulation, allosterically activated by GTP. Functionally, catalyzes the conversion of uracil and 5-phospho-alpha-D-ribose 1-diphosphate (PRPP) to UMP and diphosphate. This Mycobacteroides abscessus (strain ATCC 19977 / DSM 44196 / CCUG 20993 / CIP 104536 / JCM 13569 / NCTC 13031 / TMC 1543 / L948) (Mycobacterium abscessus) protein is Uracil phosphoribosyltransferase.